Consider the following 246-residue polypeptide: Small ribosomal subunit protein uS2 (246 aa).

The protein belongs to the universal ribosomal protein uS2 family.

The chain is Small ribosomal subunit protein uS2 from Helicobacter acinonychis (strain Sheeba).